A 121-amino-acid chain; its full sequence is Large ribosomal subunit protein bL12 (121 aa).

This sequence belongs to the bacterial ribosomal protein bL12 family. Homodimer. Part of the ribosomal stalk of the 50S ribosomal subunit. Forms a multimeric L10(L12)X complex, where L10 forms an elongated spine to which 2 to 4 L12 dimers bind in a sequential fashion. Binds GTP-bound translation factors.

In terms of biological role, forms part of the ribosomal stalk which helps the ribosome interact with GTP-bound translation factors. Is thus essential for accurate translation. This Xanthomonas euvesicatoria pv. vesicatoria (strain 85-10) (Xanthomonas campestris pv. vesicatoria) protein is Large ribosomal subunit protein bL12.